The chain runs to 587 residues: Pyruvate kinase (587 aa).

Arginine 33 contacts substrate. Residues asparagine 35, serine 37, aspartate 67, and threonine 68 each contribute to the K(+) site. 35–38 is an ATP binding site; it reads NFSH. Residues arginine 74 and lysine 157 each coordinate ATP. Lysine 221 contacts substrate. Glutamate 223 is a Mg(2+) binding site. Substrate is bound by residues glycine 246, aspartate 247, and threonine 279. Aspartate 247 is a Mg(2+) binding site.

Belongs to the pyruvate kinase family. The protein in the C-terminal section; belongs to the PEP-utilizing enzyme family. In terms of assembly, homotetramer. Mg(2+) serves as cofactor. It depends on K(+) as a cofactor. In terms of processing, the N-terminus is blocked.

The catalysed reaction is pyruvate + ATP = phosphoenolpyruvate + ADP + H(+). It functions in the pathway carbohydrate degradation; glycolysis; pyruvate from D-glyceraldehyde 3-phosphate: step 5/5. Exhibits homotropic positive cooperativity for PEP. Allosterically activated by ribose-5-phosphate, AMP and other nucleoside monophosphates but not by fructose-1,6-bisphosphate. In terms of biological role, catalyzes the phosphoryl transfer from phosphoenolpyruvate (PEP) to ADP to form pyruvate and ATP. Has a broad specificity for nucleoside diphosphates and can use ADP, GDP, IDP and UDP. The polypeptide is Pyruvate kinase (pyk) (Geobacillus stearothermophilus (Bacillus stearothermophilus)).